The primary structure comprises 181 residues: MKRKLLSSLAISALSLGLLVSAPTASFAAESTSTKAHTESTMRTQSTASLFATITGASKTEWSFSDIELTYRPNTLLSLGVMEFTLPSGFTANTKDTLNGNALRTTQILNNGKTVRVPLALDLLGAGEFKLKLNNKTLPAAGTYTFRAENKSLSIGNKFYAEASIDVAKRSTPPTQPCGCN.

A signal peptide spans 1 to 28; sequence MKRKLLSSLAISALSLGLLVSAPTASFA.

It belongs to the BslA/BslB family. Forms polymers.

It is found in the secreted. It localises to the cell wall. In terms of biological role, involved in biofilm formation. Self-polymerizes and forms a layer on the surface of biofilms that confers hydrophobicity to the biofilm. The layer is stable and capable of resistance to high mechanical force compression. Required for complex colony architecture. May function synergistically with exopolysaccharides and TasA amyloid fibers to facilitate the assembly of the biofilm matrix. This is Biofilm-surface layer protein A from Bacillus subtilis (strain 168).